We begin with the raw amino-acid sequence, 731 residues long: 1,4-alpha-glucan branching enzyme GlgB (731 aa).

Asp-412 functions as the Nucleophile in the catalytic mechanism. The active-site Proton donor is Glu-465.

This sequence belongs to the glycosyl hydrolase 13 family. GlgB subfamily. Monomer.

The catalysed reaction is Transfers a segment of a (1-&gt;4)-alpha-D-glucan chain to a primary hydroxy group in a similar glucan chain.. Its pathway is glycan biosynthesis; glycogen biosynthesis. Functionally, catalyzes the formation of the alpha-1,6-glucosidic linkages in glycogen by scission of a 1,4-alpha-linked oligosaccharide from growing alpha-1,4-glucan chains and the subsequent attachment of the oligosaccharide to the alpha-1,6 position. The sequence is that of 1,4-alpha-glucan branching enzyme GlgB from Bordetella bronchiseptica (strain ATCC BAA-588 / NCTC 13252 / RB50) (Alcaligenes bronchisepticus).